The sequence spans 311 residues: Probable manganese-dependent inorganic pyrophosphatase (311 aa).

Mn(2+) is bound by residues His-9, Asp-13, Asp-15, Asp-77, His-99, and Asp-151.

It belongs to the PPase class C family. Mn(2+) is required as a cofactor.

It localises to the cytoplasm. The enzyme catalyses diphosphate + H2O = 2 phosphate + H(+). In Streptococcus equi subsp. zooepidemicus (strain H70), this protein is Probable manganese-dependent inorganic pyrophosphatase.